Consider the following 149-residue polypeptide: Large ribosomal subunit protein uL11 (149 aa).

It belongs to the universal ribosomal protein uL11 family. Part of the ribosomal stalk of the 50S ribosomal subunit. Interacts with L10 and the large rRNA to form the base of the stalk. L10 forms an elongated spine to which L12 dimers bind in a sequential fashion forming a multimeric L10(L12)X complex. One or more lysine residues are methylated.

In terms of biological role, forms part of the ribosomal stalk which helps the ribosome interact with GTP-bound translation factors. This is Large ribosomal subunit protein uL11 from Methylorubrum extorquens (strain CM4 / NCIMB 13688) (Methylobacterium extorquens).